The chain runs to 194 residues: uncharacterized protein (194 aa).

This is an uncharacterized protein from Tomato ringspot virus (isolate raspberry) (ToRSV).